A 938-amino-acid chain; its full sequence is Collagen alpha-1(I) chain (938 aa).

The segment at 1-938 is disordered; sequence GGISVPGPMG…PGPPGPPGPP (938 aa). Residues Pro-18, Pro-21, Pro-24, Pro-33, Pro-36, Pro-39, Pro-54, Pro-69, Pro-75, Pro-84, and Pro-90 each carry the 4-hydroxyproline modification. Positions 26–45 are enriched in low complexity; it reads PQGFQGPPGEPGEPGASGPM. Over residues 57–71 the composition is skewed to basic and acidic residues; that stretch reads NGDDGEAGKPGRPGE. Lys-93 is modified (5-hydroxylysine; alternate). Residue Lys-93 is glycosylated (O-linked (Gal...) hydroxylysine; alternate). Residue Ser-99 is modified to Phosphoserine. Over residues 107 to 135 the composition is skewed to low complexity; that stretch reads DAGPAGPKGRPGASGPAGARGNDGATGAA. 4-hydroxyproline is present on residues Pro-117, Pro-138, Pro-147, Pro-150, Pro-177, Pro-180, Pro-192, Pro-198, Pro-207, Pro-213, Pro-216, and Pro-231. Over residues 137 to 149 the composition is skewed to pro residues; that stretch reads PPGPTGPAGPPGF. Low complexity predominate over residues 183 to 222; it reads AGAAGPAGNPGADGQPGAKGANGAPGIAGAPGFPGARGPS. Lys-234 carries the post-translational modification 5-hydroxylysine. Residues Pro-240, Pro-243, Pro-255, Pro-264, Pro-279, Pro-285, Pro-294, and Pro-300 each carry the 4-hydroxyproline modification. Over residues 289 to 298 the composition is skewed to gly residues; it reads GERGGPGSRG. Lys-309 carries the post-translational modification 5-hydroxylysine. 4-hydroxyproline is present on residues Pro-314, Pro-323, Pro-329, Pro-335, Pro-344, Pro-347, Pro-356, Pro-365, Pro-371, Pro-383, Pro-392, Pro-401, Pro-404, Pro-422, Pro-439, Pro-445, Pro-451, Pro-458, Pro-464, Pro-476, Pro-485, Pro-497, Pro-503, Pro-509, and Pro-518. Low complexity predominate over residues 338 to 364; the sequence is KGLTGSPGSPGPDGKTGPPGPAGQDGR. The segment covering 373–392 has biased composition (low complexity); sequence ARGQAGVMGFPGPKGAAGEP. 5-hydroxylysine is present on Lys-530. Pro-536, Pro-551, and Pro-557 each carry 4-hydroxyproline. The segment covering 563 to 577 has biased composition (low complexity); that stretch reads SGPSGPAGPTGARGA. The residue at position 566 (Ser-566) is a Phosphoserine. 4-hydroxyproline occurs at positions 578, 584, 587, 596, 602, 620, 629, and 638. The segment covering 590–617 has biased composition (low complexity); sequence AGFAGPPGADGQPGAKGEPGDAGAKGDA. Residues 619-631 show a composition bias toward pro residues; sequence PPGPAGPTGPPGP. At Lys-641 the chain carries 5-hydroxylysine. Over residues 646 to 662 the composition is skewed to low complexity; the sequence is SAGPPGATGFPGAAGRV. Pro-650 and Pro-656 each carry 4-hydroxyproline. A 3-hydroxyproline modification is found at Pro-664. Residues Pro-665, Pro-674, Pro-677, Pro-693, Pro-703, Pro-712, Pro-730, Pro-739, Pro-742, Pro-748, Pro-763, Pro-769, Pro-775, Pro-784, and Pro-790 each carry the 4-hydroxyproline modification. Pro residues predominate over residues 762 to 772; that stretch reads PPGPMGPPGLA. Lys-799 carries the post-translational modification 5-hydroxylysine. The span at 807–822 shows a compositional bias: pro residues; the sequence is PGPPGAPGAPGAPGPV. Residues Pro-810, Pro-813, and Pro-816 each carry the 4-hydroxyproline modification. The segment covering 843-867 has biased composition (low complexity); the sequence is AGPAGARGPAGPQGPRRGFSGLQGP. 4 positions are modified to 4-hydroxyproline: Pro-871, Pro-874, Pro-892, and Pro-907. Residues 874-907 are compositionally biased toward low complexity; it reads PGEQGPSGASGPAGPRGPPGSAGSPGKDGLNGLP. Pro-912 carries the 3-hydroxyproline modification. At Pro-913 the chain carries 4-hydroxyproline. The segment covering 923 to 938 has biased composition (pro residues); sequence VGPPGPPGPPGPPGPP. Pro-925 is subject to 3-hydroxyproline. Pro-926 is subject to 4-hydroxyproline. 3-hydroxyproline is present on Pro-928. Pro-929 bears the 4-hydroxyproline mark. Pro-931 is modified (3-hydroxyproline). 4-hydroxyproline is present on residues Pro-932, Pro-935, and Pro-938.

The protein belongs to the fibrillar collagen family. Trimers of one alpha 2(I) and two alpha 1(I) chains. In terms of processing, contains mostly 4-hydroxyproline. Proline residues at the third position of the tripeptide repeating unit (G-X-Y) are hydroxylated in some or all of the chains. Post-translationally, contains 3-hydroxyproline at a few sites. This modification occurs on the first proline residue in the sequence motif Gly-Pro-Hyp, where Hyp is 4-hydroxyproline. Lysine residues at the third position of the tripeptide repeating unit (G-X-Y) are 5-hydroxylated in some or all of the chains. In terms of processing, O-glycosylated on hydroxylated lysine residues. The O-linked glycan consists of a Glc-Gal disaccharide. In terms of tissue distribution, expressed in bones.

It localises to the secreted. It is found in the extracellular space. The protein resides in the extracellular matrix. Type I collagen is a member of group I collagen (fibrillar forming collagen). This is Collagen alpha-1(I) chain from Megalonyx jeffersonii (Jefferson's ground sloth).